The sequence spans 68 residues: Large ribosomal subunit protein bL33c (68 aa).

This sequence belongs to the bacterial ribosomal protein bL33 family.

It localises to the plastid. Its subcellular location is the chloroplast. The chain is Large ribosomal subunit protein bL33c from Pinus koraiensis (Korean pine).